Reading from the N-terminus, the 397-residue chain is Formate-dependent phosphoribosylglycinamide formyltransferase (397 aa).

Residues 22–23 and glutamate 82 each bind N(1)-(5-phospho-beta-D-ribosyl)glycinamide; that span reads EL. ATP is bound by residues arginine 114, lysine 155, 160–165, 195–198, and glutamate 203; these read SSGKGQ and EGFV. The region spanning 119 to 312 is the ATP-grasp domain; that stretch reads CLAAEELSLP…EFALHARAIL (194 aa). Mg(2+)-binding residues include glutamate 271 and glutamate 283. N(1)-(5-phospho-beta-D-ribosyl)glycinamide-binding positions include aspartate 290, lysine 360, and 367-368; that span reads RR.

The protein belongs to the PurK/PurT family. As to quaternary structure, homodimer.

It carries out the reaction N(1)-(5-phospho-beta-D-ribosyl)glycinamide + formate + ATP = N(2)-formyl-N(1)-(5-phospho-beta-D-ribosyl)glycinamide + ADP + phosphate + H(+). It participates in purine metabolism; IMP biosynthesis via de novo pathway; N(2)-formyl-N(1)-(5-phospho-D-ribosyl)glycinamide from N(1)-(5-phospho-D-ribosyl)glycinamide (formate route): step 1/1. In terms of biological role, involved in the de novo purine biosynthesis. Catalyzes the transfer of formate to 5-phospho-ribosyl-glycinamide (GAR), producing 5-phospho-ribosyl-N-formylglycinamide (FGAR). Formate is provided by PurU via hydrolysis of 10-formyl-tetrahydrofolate. The protein is Formate-dependent phosphoribosylglycinamide formyltransferase of Alcanivorax borkumensis (strain ATCC 700651 / DSM 11573 / NCIMB 13689 / SK2).